The sequence spans 443 residues: Trigger factor (443 aa).

One can recognise a PPIase FKBP-type domain in the interval Gly-161–Pro-246.

The protein belongs to the FKBP-type PPIase family. Tig subfamily.

It is found in the cytoplasm. The enzyme catalyses [protein]-peptidylproline (omega=180) = [protein]-peptidylproline (omega=0). In terms of biological role, involved in protein export. Acts as a chaperone by maintaining the newly synthesized protein in an open conformation. Functions as a peptidyl-prolyl cis-trans isomerase. In Legionella pneumophila (strain Lens), this protein is Trigger factor.